The sequence spans 588 residues: ATP-dependent lipid A-core flippase (588 aa).

Transmembrane regions (helical) follow at residues 23 to 43 (FWPV…IDAG), 56 to 76 (FITI…IGIT), 141 to 161 (DALT…TVMM), 162 to 182 (VICW…GIIV), 257 to 277 (LVIA…STVI), and 278 to 298 (TISA…IKPM). The ABC transmembrane type-1 domain maps to 28-310 (LLGVLANILY…LTTLNATIQR (283 aa)). The ABC transporter domain maps to 342 to 576 (IEFKHVYHAY…DGHYAQLYKV (235 aa)). An ATP-binding site is contributed by 375–382 (GHSGSGKT).

It belongs to the ABC transporter superfamily. Lipid exporter (TC 3.A.1.106) family. Homodimer.

Its subcellular location is the cell inner membrane. The catalysed reaction is ATP + H2O + lipid A-core oligosaccharideSide 1 = ADP + phosphate + lipid A-core oligosaccharideSide 2.. In terms of biological role, involved in lipopolysaccharide (LPS) biosynthesis. Translocates lipid A-core from the inner to the outer leaflet of the inner membrane. Transmembrane domains (TMD) form a pore in the inner membrane and the ATP-binding domain (NBD) is responsible for energy generation. In Legionella pneumophila (strain Lens), this protein is ATP-dependent lipid A-core flippase.